Consider the following 619-residue polypeptide: Trihelix transcription factor GTL2 (619 aa).

2 disordered regions span residues 11-41 (HRFI…VSFS) and 62-100 (HHHH…HHHH). The span at 16 to 27 (SPPPPPPLPPHQ) shows a compositional bias: pro residues. Residues 102 to 154 (PWCSDEVLALLRFRSTVENWFPEFTWEHTSRKLAEVGFKRSPQECKEKFEEEE) enclose the Myb-like 1 domain. The stretch at 307–361 (VRNMIAQQEEMHKKLLEDMVKKEEEKIAREEAWKKQEIERVNKEVEIRAQEQAMA) forms a coiled coil. Disordered regions lie at residues 382 to 414 (VVQN…SSLL) and 434 to 458 (STKT…DLGK). Over residues 384–396 (QNPTSPSQDSSSL) the composition is skewed to polar residues. Over residues 435-444 (TKTLKPKNQN) the composition is skewed to low complexity. Over residues 448–458 (PKSDDKSDLGK) the composition is skewed to basic and acidic residues. The Myb-like 2 domain maps to 459 to 526 (RWPKDEVLAL…RCKEKWENIN (68 aa)). Residues 503–510 (SKKMLEIG) carry the Nuclear localization signal motif. Positions 557 to 619 (SQPPTGTTAT…VQFSGFDLEF (63 aa)) are disordered. Positions 561–574 (TGTTATTATTATSA) are enriched in low complexity. Over residues 575 to 585 (RDLDTRPEENR) the composition is skewed to basic and acidic residues.

It is found in the nucleus. Its function is as follows. Probable transcription factor that binds specific DNA sequence. This is Trihelix transcription factor GTL2 from Arabidopsis thaliana (Mouse-ear cress).